A 102-amino-acid polypeptide reads, in one-letter code: Putative pterin-4-alpha-carbinolamine dehydratase (102 aa).

Belongs to the pterin-4-alpha-carbinolamine dehydratase family.

The enzyme catalyses (4aS,6R)-4a-hydroxy-L-erythro-5,6,7,8-tetrahydrobiopterin = (6R)-L-erythro-6,7-dihydrobiopterin + H2O. In Burkholderia ambifaria (strain MC40-6), this protein is Putative pterin-4-alpha-carbinolamine dehydratase.